A 424-amino-acid polypeptide reads, in one-letter code: Serine--tRNA ligase (424 aa).

229-231 (TAE) serves as a coordination point for L-serine. ATP-binding positions include 260-262 (RTE) and Val-276. Glu-283 contacts L-serine. 347–350 (EVTS) is an ATP binding site. L-serine is bound at residue Thr-382.

The protein belongs to the class-II aminoacyl-tRNA synthetase family. Type-1 seryl-tRNA synthetase subfamily. Homodimer. The tRNA molecule binds across the dimer.

Its subcellular location is the cytoplasm. The enzyme catalyses tRNA(Ser) + L-serine + ATP = L-seryl-tRNA(Ser) + AMP + diphosphate + H(+). It catalyses the reaction tRNA(Sec) + L-serine + ATP = L-seryl-tRNA(Sec) + AMP + diphosphate + H(+). It functions in the pathway aminoacyl-tRNA biosynthesis; selenocysteinyl-tRNA(Sec) biosynthesis; L-seryl-tRNA(Sec) from L-serine and tRNA(Sec): step 1/1. In terms of biological role, catalyzes the attachment of serine to tRNA(Ser). Is also able to aminoacylate tRNA(Sec) with serine, to form the misacylated tRNA L-seryl-tRNA(Sec), which will be further converted into selenocysteinyl-tRNA(Sec). This is Serine--tRNA ligase from Rubrobacter xylanophilus (strain DSM 9941 / JCM 11954 / NBRC 16129 / PRD-1).